A 102-amino-acid polypeptide reads, in one-letter code: Small ribosomal subunit protein uS10 (102 aa).

This sequence belongs to the universal ribosomal protein uS10 family. As to quaternary structure, part of the 30S ribosomal subunit.

Functionally, involved in the binding of tRNA to the ribosomes. This is Small ribosomal subunit protein uS10 from Pyrococcus abyssi (strain GE5 / Orsay).